Here is a 188-residue protein sequence, read N- to C-terminus: MKQLCCSCLLWLGLLLAPFSQEQEEVTSPTKLCGRDLLVEVIKLCGQNDWSRFSMEEQSPMTELVPQYTRKVKTFNPHRSSSSWGRFTNPGVSQKKATHTWESQSLPNYQLKKEELLPKTGVHSYHGGKPYVKSVKFQKKNTDKMSTFSGLFWGNHPQRKRRGFADKCCAIGCSKEELAVACLPFVDF.

The signal sequence occupies residues 1–22 (MKQLCCSCLLWLGLLLAPFSQE). Disulfide bonds link cysteine 33/cysteine 169, cysteine 45/cysteine 182, and cysteine 168/cysteine 173. The propeptide at 53–158 (FSMEEQSPMT…SGLFWGNHPQ (106 aa)) is connecting peptide.

It belongs to the insulin family. As to expression, testis and prostate specific.

It localises to the secreted. In terms of biological role, may have a role in sperm development and fertilization. In Rattus norvegicus (Rat), this protein is Insulin-like peptide INSL6 (Insl6).